The sequence spans 310 residues: 2-ketogluconate reductase (310 aa).

NADP(+)-binding positions include 151–152 (HI) and 227–229 (IAR). Residues arginine 229 and glutamate 258 contribute to the active site. Histidine 276 (proton donor) is an active-site residue.

This sequence belongs to the D-isomer specific 2-hydroxyacid dehydrogenase family. In terms of assembly, homohexamer.

It carries out the reaction D-gluconate + NADP(+) = 2-dehydro-D-gluconate + NADPH + H(+). Functionally, catalyzes the reduction of 2-keto-D-gluconate to gluconate. Can also catalyze the reduction of 2-keto-L-gulonate. Can use both NADH and NADPH efficiently, with a slight preference for NADPH. The chain is 2-ketogluconate reductase from Gluconobacter oxydans (strain 621H) (Gluconobacter suboxydans).